Here is a 435-residue protein sequence, read N- to C-terminus: Monodehydroascorbate reductase 3, cytosolic (435 aa).

FAD contacts are provided by residues 14 to 17 (GGVA), Glu-41, Arg-48, Lys-53, Ile-96, and 147 to 148 (RE). Residues 172-178 (GGYIGLE), Glu-196, Arg-202, and Gly-261 each bind NAD(+). 174–178 (YIGLE) serves as a coordination point for NADP(+). Positions 202 and 261 each coordinate NADP(+). Asp-298 lines the FAD pocket. 314-315 (EH) lines the NAD(+) pocket. 314–315 (EH) contacts NADP(+). An FAD-binding site is contributed by Val-316. Arg-320 is an L-ascorbate binding site. Position 349 (Tyr-349) interacts with FAD. Tyr-349 serves as a coordination point for NAD(+). NADP(+) is bound at residue Tyr-349. An L-ascorbate-binding site is contributed by Arg-351.

It belongs to the FAD-dependent oxidoreductase family. Requires FAD as cofactor.

The protein localises to the cytoplasm. It carries out the reaction 2 monodehydro-L-ascorbate radical + NADH + H(+) = 2 L-ascorbate + NAD(+). Its function is as follows. Catalyzes the conversion of monodehydroascorbate to ascorbate, oxidizing NADH in the process. Ascorbate is a major antioxidant against reactive oxygen species (ROS) and nitric oxide (NO). Can use NADPH as electron donor, but possesses lower activity compared to NADH as electron donor. This is Monodehydroascorbate reductase 3, cytosolic from Oryza sativa subsp. japonica (Rice).